The chain runs to 386 residues: Tryptophan--tRNA ligase (386 aa).

The 'HIGH' region motif lies at 82 to 90 (PSGPMHIGH). A 'KMSKS' region motif is present at residues 253 to 257 (KMSAS).

The protein belongs to the class-I aminoacyl-tRNA synthetase family.

Its subcellular location is the cytoplasm. It carries out the reaction tRNA(Trp) + L-tryptophan + ATP = L-tryptophyl-tRNA(Trp) + AMP + diphosphate + H(+). The sequence is that of Tryptophan--tRNA ligase from Pyrococcus horikoshii (strain ATCC 700860 / DSM 12428 / JCM 9974 / NBRC 100139 / OT-3).